Reading from the N-terminus, the 346-residue chain is tRNA N6-adenosine threonylcarbamoyltransferase (346 aa).

Fe cation is bound by residues His111 and His115. Residues Leu134–Gly138, Asp167, Gly180, and Asn279 contribute to the substrate site. Asp307 is a Fe cation binding site.

Belongs to the KAE1 / TsaD family. Fe(2+) is required as a cofactor.

The protein localises to the cytoplasm. The catalysed reaction is L-threonylcarbamoyladenylate + adenosine(37) in tRNA = N(6)-L-threonylcarbamoyladenosine(37) in tRNA + AMP + H(+). Its function is as follows. Required for the formation of a threonylcarbamoyl group on adenosine at position 37 (t(6)A37) in tRNAs that read codons beginning with adenine. Is involved in the transfer of the threonylcarbamoyl moiety of threonylcarbamoyl-AMP (TC-AMP) to the N6 group of A37, together with TsaE and TsaB. TsaD likely plays a direct catalytic role in this reaction. The polypeptide is tRNA N6-adenosine threonylcarbamoyltransferase (Burkholderia vietnamiensis (strain G4 / LMG 22486) (Burkholderia cepacia (strain R1808))).